The sequence spans 226 residues: Myosin regulatory light chain 10 (226 aa).

EF-hand domains follow at residues 84–119 (NSPA…LGRI), 154–189 (DPEE…QADR), and 190–225 (FSEE…GEEK). Positions 97, 99, 101, and 108 each coordinate Ca(2+).

Myosin is a hexamer of 2 heavy chains and 4 light chains.

The protein is Myosin regulatory light chain 10 (MYL10) of Homo sapiens (Human).